A 176-amino-acid polypeptide reads, in one-letter code: Tubulin polymerization-promoting protein family member 3 (176 aa).

A disordered region spans residues T126 to E152. A compositionally biased stretch (basic and acidic residues) spans S134–E152.

Belongs to the TPPP family.

The protein resides in the cytoplasm. It is found in the cytoskeleton. Its function is as follows. Regulator of microtubule dynamic that has microtubule bundling activity. The sequence is that of Tubulin polymerization-promoting protein family member 3 (tppp3) from Xenopus tropicalis (Western clawed frog).